The sequence spans 588 residues: Succinate dehydrogenase flavoprotein subunit (588 aa).

FAD is bound by residues 14–19 (GAGGAG), 37–52 (SKVF…AQGG), and Asp-221. Position 45 is a tele-8alpha-FAD histidine (His-45). Positions 242 and 254 each coordinate substrate. An N6-acetyllysine modification is found at Lys-267. The active-site Proton acceptor is Arg-286. Position 354 (His-354) interacts with substrate. Glu-388 contributes to the FAD binding site. Arg-399 is a substrate binding site. 404–405 (SL) is an FAD binding site.

The protein belongs to the FAD-dependent oxidoreductase 2 family. FRD/SDH subfamily. In terms of assembly, part of an enzyme complex containing four subunits: a flavoprotein, an iron-sulfur, cytochrome b-556, and a hydrophobic anchor protein. The complex forms trimers. FAD serves as cofactor.

The protein resides in the cell inner membrane. It carries out the reaction a quinone + succinate = fumarate + a quinol. Its pathway is carbohydrate metabolism; tricarboxylic acid cycle; fumarate from succinate (bacterial route): step 1/1. Two distinct, membrane-bound, FAD-containing enzymes are responsible for the catalysis of fumarate and succinate interconversion; the fumarate reductase is used in anaerobic growth, and the succinate dehydrogenase is used in aerobic growth. The chain is Succinate dehydrogenase flavoprotein subunit (sdhA) from Escherichia coli O157:H7.